Consider the following 471-residue polypeptide: Maintenance of mitochondrial morphology protein 1 (471 aa).

At 1-21 the chain is on the lumenal side; sequence MSSPQNTSCPPSQHSLSFTQG. Residues 22–42 form a helical membrane-spanning segment; it reads LLLGQLSVVLLIGAFIKFFIF. Topologically, residues 43-471 are cytoplasmic; that stretch reads GESPSSSSRG…GSLPGAPAVA (429 aa). The SMP-LTD domain maps to 128-370; it reads QPESLDWFNV…EPRVQLVALP (243 aa). Disordered stretches follow at residues 271-306, 395-415, and 448-471; these read GTTE…GVRS, EDPA…NRDG, and RGDT…PAVA. Positions 280 to 295 are enriched in basic and acidic residues; it reads PHPENQNESKPSRQDP. Residues 401 to 410 are compositionally biased toward polar residues; the sequence is ATHSGFTPVN.

Belongs to the MMM1 family. In terms of assembly, homodimer. Component of the ER-mitochondria encounter structure (ERMES) or MDM complex, composed of MMM1, MDM10, MDM12 and MDM34. An MMM1 homodimer associates with one molecule of MDM12 on each side in a pairwise head-to-tail manner, and the SMP-LTD domains of MMM1 and MDM12 generate a continuous hydrophobic tunnel for phospholipid trafficking.

It localises to the endoplasmic reticulum membrane. Functionally, component of the ERMES/MDM complex, which serves as a molecular tether to connect the endoplasmic reticulum (ER) and mitochondria. Components of this complex are involved in the control of mitochondrial shape and protein biogenesis, and function in nonvesicular lipid trafficking between the ER and mitochondria. The MDM12-MMM1 subcomplex functions in the major beta-barrel assembly pathway that is responsible for biogenesis of all outer membrane beta-barrel proteins, and acts in a late step after the SAM complex. The MDM10-MDM12-MMM1 subcomplex further acts in the TOM40-specific pathway after the action of the MDM12-MMM1 complex. Essential for establishing and maintaining the structure of mitochondria and maintenance of mtDNA nucleoids. The sequence is that of Maintenance of mitochondrial morphology protein 1 from Arthroderma otae (strain ATCC MYA-4605 / CBS 113480) (Microsporum canis).